A 450-amino-acid chain; its full sequence is Molybdate-anion transporter (450 aa).

The next 12 helical transmembrane spans lie at 1 to 21 (MLVT…GLEL), 38 to 58 (FLQF…ADWL), 79 to 99 (ILYV…SSLV), 128 to 148 (FVLL…FSAF), 167 to 187 (IPAT…AAGV), 191 to 211 (AVAS…IPLL), 249 to 269 (VLLL…FVFL), 278 to 298 (GAPL…GSSL), 311 to 331 (PMHL…MLTF), 344 to 364 (FIAF…MSFL), 376 to 396 (GVLN…LLVL), and 409 to 429 (FSIC…LFTV).

It belongs to the major facilitator superfamily.

It is found in the cell membrane. Functionally, mediates high-affinity intracellular uptake of the rare oligo-element molybdenum. The chain is Molybdate-anion transporter (Mfsd5) from Mus musculus (Mouse).